Consider the following 703-residue polypeptide: Collagen alpha-2(VIII) chain (703 aa).

Residues 1 to 28 (MLGTLTPLSSLLLLLLVLVLGCGPRASS) form the signal peptide. The segment at 29-76 (GGGAGGAAGYAPVKYIQPMQKGPVGPPFREGKGQYLEMPLPLLPMDLK) is nonhelical region (NC2). The tract at residues 70–544 (LLPMDLKGEP…AFDETGIAGL (475 aa)) is disordered. Residues 77 to 536 (GEPGPPGKPG…PGPPGAPGAF (460 aa)) form a triple-helical region region. Pro residues predominate over residues 79–97 (PGPPGKPGPRGPPGPPGFP). Residues 166–192 (PSGITIPGKPGAQGVPGPPGFQGEPGP) are compositionally biased toward low complexity. Residues 206–224 (GDNGVGQPGLPGAPGQGGA) are compositionally biased toward gly residues. 2 stretches are compositionally biased toward low complexity: residues 265 to 275 (EPGAVGPKGPP) and 285 to 297 (AAGL…PSGA). The segment covering 433 to 442 (GRPGGPGVAG) has biased composition (gly residues). 2 stretches are compositionally biased toward low complexity: residues 444–462 (LGQK…RGPS) and 476–486 (PQGLPGLKGEP). Positions 506–532 (TGPPGVPGSPGITGPPGPPGPPGPPGA) are enriched in pro residues. The segment at 537 to 703 (DETGIAGLHL…SFSGFLLCPT (167 aa)) is nonhelical region (NC1). The 134-residue stretch at 570 to 703 (SAHATPAFTA…SFSGFLLCPT (134 aa)) folds into the C1q domain.

Homotrimers, or heterotrimers in association with alpha 2(VIII) type collagens. Four homotrimers can form a tetrahedron stabilized by central interacting C-terminal NC1 trimers. In terms of processing, proteolytically cleaved by neutrophil elastase, in vitro. Prolines at the third position of the tripeptide repeating unit (G-X-Y) are hydroxylated in some or all of the chains. As to expression, expressed primarily in the subendothelium of large blood vessels. Also expressed in arterioles and venules in muscle, heart, kidney, spleen, umbilical cord, liver and lung and is also found in connective tissue layers around hair follicles, around nerve bundles in muscle, in the dura of the optic nerve, in cornea and sclera, and in the perichondrium of cartilaginous tissues. In the kidney, expressed in mesangial cells, glomerular endothelial cells, and tubular epithelial cells. Also expressed in mast cells, and in astrocytes during the repair process. Expressed in Descemet's membrane.

It is found in the secreted. The protein localises to the extracellular space. The protein resides in the extracellular matrix. It localises to the basement membrane. Functionally, macromolecular component of the subendothelium. Major component of the Descemet's membrane (basement membrane) of corneal endothelial cells. Also a component of the endothelia of blood vessels. Necessary for migration and proliferation of vascular smooth muscle cells and thus, has a potential role in the maintenance of vessel wall integrity and structure, in particular in atherogenesis. This chain is Collagen alpha-2(VIII) chain (COL8A2), found in Homo sapiens (Human).